A 432-amino-acid polypeptide reads, in one-letter code: D-amino acid dehydrogenase 1 (432 aa).

3–17 (VLVLGSGVIGTASAY) contacts FAD. The tract at residues 410 to 432 (GLDISRYSNSPENAKNAHPAPAH) is disordered.

The protein belongs to the DadA oxidoreductase family. It depends on FAD as a cofactor.

It carries out the reaction a D-alpha-amino acid + A + H2O = a 2-oxocarboxylate + AH2 + NH4(+). Its pathway is amino-acid degradation; D-alanine degradation; NH(3) and pyruvate from D-alanine: step 1/1. In terms of biological role, catalyzes the oxidative deamination of D-amino acids. Has very broad substrate specificity; all the D-amino acids tested can be used as the substrate except D-Glu and D-Gln. Participates in the utilization of several D-amino acids as the sole source of nitrogen, i.e. D-alanine, D-histidine, D-phenylalanine, D-serine, D-threonine, and D-valine. The chain is D-amino acid dehydrogenase 1 (dadA1) from Pseudomonas aeruginosa (strain ATCC 15692 / DSM 22644 / CIP 104116 / JCM 14847 / LMG 12228 / 1C / PRS 101 / PAO1).